We begin with the raw amino-acid sequence, 728 residues long: Ankyrin repeat protein A (728 aa).

ANK repeat units follow at residues 381 to 410 (INLPGLYLAINYGNADIVETIFNSLSETGY), 429 to 458 (NGFSGLFLAISRKDKNVVTSILNALPKLAA), 477 to 506 (TSSHVLYHVMANGDADMLKIVLNALPLLIR), 525 to 554 (YGCPGLYLAMQNGHSDIVKVILEALPSLAQ), and 573 to 602 (ARDTGLFMAMQRGHMNVINTIFNALPTLFN).

The protein belongs to the Toxin_15 family.

In Escherichia coli (strain K12), this protein is Ankyrin repeat protein A (arpA).